The chain runs to 145 residues: Large-conductance mechanosensitive channel (145 aa).

A run of 3 helical transmembrane segments spans residues 10–30, 41–61, and 87–107; these read FALK…GAFA, IMPI…MFLI, and GNFI…FMMV.

This sequence belongs to the MscL family. In terms of assembly, homopentamer.

The protein localises to the cell inner membrane. In terms of biological role, channel that opens in response to stretch forces in the membrane lipid bilayer. May participate in the regulation of osmotic pressure changes within the cell. This is Large-conductance mechanosensitive channel from Psychrobacter arcticus (strain DSM 17307 / VKM B-2377 / 273-4).